The primary structure comprises 335 residues: Holliday junction branch migration complex subunit RuvB (335 aa).

The large ATPase domain (RuvB-L) stretch occupies residues 2–184 (ADERIVSAEN…FGIVEHMAYY (183 aa)). Residues L23, R24, G65, K68, T69, T70, 131 to 133 (EDF), R174, Y184, and R221 each bind ATP. T69 serves as a coordination point for Mg(2+). The interval 185-255 (TEADLMDIVQ…IADHALSQLQ (71 aa)) is small ATPAse domain (RuvB-S). The interval 258–335 (IRGLDGVDRK…AHLGMPYPEK (78 aa)) is head domain (RuvB-H). Residues R313 and R318 each contribute to the DNA site.

The protein belongs to the RuvB family. In terms of assembly, homohexamer. Forms an RuvA(8)-RuvB(12)-Holliday junction (HJ) complex. HJ DNA is sandwiched between 2 RuvA tetramers; dsDNA enters through RuvA and exits via RuvB. An RuvB hexamer assembles on each DNA strand where it exits the tetramer. Each RuvB hexamer is contacted by two RuvA subunits (via domain III) on 2 adjacent RuvB subunits; this complex drives branch migration. In the full resolvosome a probable DNA-RuvA(4)-RuvB(12)-RuvC(2) complex forms which resolves the HJ.

Its subcellular location is the cytoplasm. It catalyses the reaction ATP + H2O = ADP + phosphate + H(+). The RuvA-RuvB-RuvC complex processes Holliday junction (HJ) DNA during genetic recombination and DNA repair, while the RuvA-RuvB complex plays an important role in the rescue of blocked DNA replication forks via replication fork reversal (RFR). RuvA specifically binds to HJ cruciform DNA, conferring on it an open structure. The RuvB hexamer acts as an ATP-dependent pump, pulling dsDNA into and through the RuvAB complex. RuvB forms 2 homohexamers on either side of HJ DNA bound by 1 or 2 RuvA tetramers; 4 subunits per hexamer contact DNA at a time. Coordinated motions by a converter formed by DNA-disengaged RuvB subunits stimulates ATP hydrolysis and nucleotide exchange. Immobilization of the converter enables RuvB to convert the ATP-contained energy into a lever motion, pulling 2 nucleotides of DNA out of the RuvA tetramer per ATP hydrolyzed, thus driving DNA branch migration. The RuvB motors rotate together with the DNA substrate, which together with the progressing nucleotide cycle form the mechanistic basis for DNA recombination by continuous HJ branch migration. Branch migration allows RuvC to scan DNA until it finds its consensus sequence, where it cleaves and resolves cruciform DNA. This is Holliday junction branch migration complex subunit RuvB from Latilactobacillus sakei subsp. sakei (strain 23K) (Lactobacillus sakei subsp. sakei).